The primary structure comprises 374 residues: DNA replication and repair protein RecF (374 aa).

ATP is bound at residue 30–37; it reads GPNAQGKS.

The protein belongs to the RecF family.

It is found in the cytoplasm. The RecF protein is involved in DNA metabolism; it is required for DNA replication and normal SOS inducibility. RecF binds preferentially to single-stranded, linear DNA. It also seems to bind ATP. This is DNA replication and repair protein RecF from Acaryochloris marina (strain MBIC 11017).